We begin with the raw amino-acid sequence, 386 residues long: uncharacterized protein (386 aa).

A disordered region spans residues 355-386 (PSEAQKVQVKSNKKPPIAPKPEHLKKRDHGLC). Basic residues predominate over residues 377 to 386 (HLKKRDHGLC).

This is an uncharacterized protein from Rickettsia prowazekii (strain Madrid E).